Here is a 359-residue protein sequence, read N- to C-terminus: Insulin gene enhancer protein isl-2a (359 aa).

LIM zinc-binding domains lie at 27–80 and 30–143; these read CVGC…CKRD and CGSQ…RADH. Residues 171 to 190 are disordered; it reads EPVPVRQPPHRNHVHKQSEK. The segment at residues 191–250 is a DNA-binding region (homeobox); the sequence is TTRVRTVLNEKQLHTLRTCYNANPRPDALMKEQLVEMTGLSPRVIRVWFQNKRCKDKKKS. A compositionally biased stretch (low complexity) spans 326-336; that stretch reads ESGSLGNSSGS. Positions 326 to 359 are disordered; it reads ESGSLGNSSGSDVTSLSSQLPDTPNSMVPSPVET. Residues 337-359 show a composition bias toward polar residues; it reads DVTSLSSQLPDTPNSMVPSPVET.

It localises to the nucleus. In terms of biological role, binds to one of the cis-acting domain of the insulin gene enhancer. May be involved in subtype specialization of primary motoneurons. This chain is Insulin gene enhancer protein isl-2a (isl2a), found in Danio rerio (Zebrafish).